A 383-amino-acid chain; its full sequence is Heme A synthase (383 aa).

8 helical membrane-spanning segments follow: residues 38-58 (VRVWLMMLFGLVVIMIAVGGL), 127-147 (VIGLVWALGFFGFLVTRKIPP), 153-173 (LFLLGVLGGLQGAIGWWMVAS), 187-207 (LATHLGLAFFILGLIAWYIMV), 230-250 (ANWLMGLAAVQILLGALVAGI), 287-307 (LVQFNHRMVGYLLLLVGLYVW), 321-341 (AFDWVAVILFGQMVLGIVTVL), and 344-364 (APWTWAIAHQFGAVVTICLIL). H292 contacts heme. H352 contacts heme.

The protein belongs to the COX15/CtaA family. Type 2 subfamily. In terms of assembly, interacts with CtaB. Requires heme b as cofactor.

The protein localises to the cell membrane. It carries out the reaction Fe(II)-heme o + 2 A + H2O = Fe(II)-heme a + 2 AH2. It participates in porphyrin-containing compound metabolism; heme A biosynthesis; heme A from heme O: step 1/1. Functionally, catalyzes the conversion of heme O to heme A by two successive hydroxylations of the methyl group at C8. The first hydroxylation forms heme I, the second hydroxylation results in an unstable dihydroxymethyl group, which spontaneously dehydrates, resulting in the formyl group of heme A. The polypeptide is Heme A synthase (Dinoroseobacter shibae (strain DSM 16493 / NCIMB 14021 / DFL 12)).